Consider the following 128-residue polypeptide: Phosphoribosyl-AMP cyclohydrolase (128 aa).

Asp-86 serves as a coordination point for Mg(2+). Cys-87 provides a ligand contact to Zn(2+). Asp-88 and Asp-90 together coordinate Mg(2+). Residues Cys-103 and Cys-110 each contribute to the Zn(2+) site.

The protein belongs to the PRA-CH family. In terms of assembly, homodimer. Requires Mg(2+) as cofactor. It depends on Zn(2+) as a cofactor.

It is found in the cytoplasm. It catalyses the reaction 1-(5-phospho-beta-D-ribosyl)-5'-AMP + H2O = 1-(5-phospho-beta-D-ribosyl)-5-[(5-phospho-beta-D-ribosylamino)methylideneamino]imidazole-4-carboxamide. It participates in amino-acid biosynthesis; L-histidine biosynthesis; L-histidine from 5-phospho-alpha-D-ribose 1-diphosphate: step 3/9. Catalyzes the hydrolysis of the adenine ring of phosphoribosyl-AMP. The protein is Phosphoribosyl-AMP cyclohydrolase of Roseobacter denitrificans (strain ATCC 33942 / OCh 114) (Erythrobacter sp. (strain OCh 114)).